Consider the following 159-residue polypeptide: ATP-dependent Clp protease adapter protein CLPS1, chloroplastic (159 aa).

A chloroplast-targeting transit peptide spans 1 to 44; sequence METAICGRLALAPSSLFNSKSGDKHLVSKGPCVNRSILMTLSTS.

Belongs to the ClpS family. As to quaternary structure, interacts with CLPC1 (via N-terminus) and CLPC2, but not with CLPt1 or CLPT2. Binds to ClpF; this interaction stimulates their association with ClpC. In terms of tissue distribution, expressed exclusively in photosynthetic green tissues with high levels in young, developing leaf tissues.

The protein resides in the plastid. It is found in the chloroplast stroma. Its function is as follows. Small adapter protein that modulate the activity of CLPC. Involved in plastid biogenesis in particular when chloroplast protein synthesis capacity is a limiting factor. Probably involved in substrate selection for plastid Clp protease system. Recruitment to ClpC chaperones is facilitated by CLPF thus forming a binary adapter for selective substrate recognition and delivery to plastid Clp protease system (CLPC). The sequence is that of ATP-dependent Clp protease adapter protein CLPS1, chloroplastic from Arabidopsis thaliana (Mouse-ear cress).